A 478-amino-acid polypeptide reads, in one-letter code: Lipoprotein lipase (478 aa).

Residues M1–A28 form the signal peptide. An interaction with GPIHBP1 region spans residues K35–T56. Residues C57 and C70 are joined by a disulfide bond. N73 carries N-linked (GlcNAc...) asparagine glycosylation. Y124 bears the 3'-nitrotyrosine mark. The Nucleophile role is filled by S162. Catalysis depends on D186, which acts as the Charge relay system. Y194 carries the post-translational modification 3'-nitrotyrosine. Residues A197, R200, S202, and D205 each coordinate Ca(2+). A disulfide bond links C246 and C269. The tract at residues C246–C269 is essential for determining substrate specificity. The active-site Charge relay system is the H271. N287 is a glycosylation site (N-linked (GlcNAc...) asparagine). Cystine bridges form between C294-C313 and C305-C308. Positions F344–K467 constitute a PLAT domain. The residue at position 346 (Y346) is a 3'-nitrotyrosine. Residue N389 is glycosylated (N-linked (GlcNAc...) asparagine). Residues W420–W424 form an important for interaction with lipoprotein particles region. An important for heparin binding region spans residues K433–K437. Positions I446–D470 are interaction with GPIHBP1. The cysteines at positions 448 and 468 are disulfide-linked.

It belongs to the AB hydrolase superfamily. Lipase family. As to quaternary structure, homodimer. Interacts with GPIHBP1 with 1:1 stoichiometry. Interacts with APOC2; the interaction activates LPL activity in the presence of lipids. Interaction with heparan sulfate proteoglycans is required to protect LPL against loss of activity. Associates with lipoprotein particles in blood plasma. Interacts with LMF1 and SEL1L; interaction with SEL1L is required to prevent aggregation of newly synthesized LPL in the endoplasmic reticulum (ER), and for normal export of LPL from the ER to the extracellular space. Interacts with SORL1; SORL1 acts as a sorting receptor, promoting LPL localization to endosomes and later to lysosomes, leading to degradation of newly synthesized LPL. Tyrosine nitration after lipopolysaccharide (LPS) challenge down-regulates the lipase activity. Detected in milk (at protein level).

Its subcellular location is the cell membrane. The protein resides in the secreted. It localises to the extracellular space. It is found in the extracellular matrix. The enzyme catalyses a triacylglycerol + H2O = a diacylglycerol + a fatty acid + H(+). The catalysed reaction is a 1,2-diacyl-sn-glycero-3-phosphocholine + H2O = a 2-acyl-sn-glycero-3-phosphocholine + a fatty acid + H(+). It carries out the reaction 1,2,3-tri-(9Z-octadecenoyl)-glycerol + H2O = di-(9Z)-octadecenoylglycerol + (9Z)-octadecenoate + H(+). It catalyses the reaction 1,2-di-(9Z-octadecenoyl)-sn-glycero-3-phosphocholine + H2O = (9Z-octadecenoyl)-sn-glycero-3-phosphocholine + (9Z)-octadecenoate + H(+). The enzyme catalyses 1,2,3-tributanoylglycerol + H2O = dibutanoylglycerol + butanoate + H(+). The catalysed reaction is 1,2-dihexadecanoyl-sn-glycero-3-phosphocholine + H2O = hexadecanoyl-sn-glycero-3-phosphocholine + hexadecanoate + H(+). With respect to regulation, the apolipoprotein APOC2 acts as a coactivator of LPL activity. Ca(2+) binding promotes protein stability and formation of the active homodimer. Interaction with GPIHBP1 protects LPL against inactivation by ANGPTL4. Key enzyme in triglyceride metabolism. Catalyzes the hydrolysis of triglycerides from circulating chylomicrons and very low density lipoproteins (VLDL), and thereby plays an important role in lipid clearance from the blood stream, lipid utilization and storage. Although it has both phospholipase and triglyceride lipase activities it is primarily a triglyceride lipase with low but detectable phospholipase activity. Mediates margination of triglyceride-rich lipoprotein particles in capillaries. Recruited to its site of action on the luminal surface of vascular endothelium by binding to GPIHBP1 and cell surface heparan sulfate proteoglycans. This chain is Lipoprotein lipase (LPL), found in Bos taurus (Bovine).